We begin with the raw amino-acid sequence, 95 residues long: Large ribosomal subunit protein bL27 (95 aa).

Positions 1–6 (MILQLF) are excised as a propeptide.

It belongs to the bacterial ribosomal protein bL27 family. The N-terminus is cleaved by ribosomal processing cysteine protease Prp.

The chain is Large ribosomal subunit protein bL27 from Caldanaerobacter subterraneus subsp. tengcongensis (strain DSM 15242 / JCM 11007 / NBRC 100824 / MB4) (Thermoanaerobacter tengcongensis).